The following is a 202-amino-acid chain: Protein FAR-RED ELONGATED HYPOCOTYL 1 (202 aa).

Ser-39 bears the Phosphoserine mark. The Nuclear localization sequence (NLS) signature appears at 40-43 (KKRK). The short motif at 54-57 (LLPL) is the Nuclear export sequence (NES) element. A Phosphothreonine modification is found at Thr-61.

This sequence belongs to the FHY1 protein family. As to quaternary structure, homodimer and heterodimer with FHL. Interacts with underphosphorylated PHYA, especially upon far-red (FR) light illumination. Binds to LAF1 and HFR1. Forms PHYA/FHY1/HFR1 complex in darkness but dissociates from PHYA and HFR1 in response to continuous FR light (FRc). Post-translationally, inactivated by rapid reversible PHYA-mediated phosphorylation at Ser-39 and Thr-61 in red light (R), thus inhibiting PHYA signaling in a negative feedback loop; this ensures the seedling deetiolation process in response to a R-enriched light condition. Subsequent exposure to far-red light (FR) after the R conditions leads to dephosphorylation. The phosphorylated form is cytoplasmic only and unable to bind to chromatin at direct target genes whereas the unphosphorylated form can shuttle from cytoplasm to nucleus. In terms of tissue distribution, expressed in hypocotyl cells of etiolated plants.

It is found in the nucleus. Its subcellular location is the cytoplasm. In terms of biological role, key regulator of far red / red (FR/R) spectrum-specific responses essential for the adaption to changing light conditions (e.g. de-etiolation), essentially by regulating PHYA shuttling from the cytoplasm to the nucleus and by directly regulating the expression of some target genes, depending on light conditions and phosphorylation status. Binds chromatin at target genes promoters, especially in FR light conditions. Can activate transcription of different genes, some being in a phytochrome A (PHYA)-dependent and other in a PHYA-independent manners. Controls specific aspects of plant development, such as the inhibition of seed germination under FR during salt stress. Essential for light-regulated PHYA nuclear accumulation and subsequent PHYA phototropic signaling processes involved in photomorphogenesis. Mediates the association of PHYA with HFR1 and LAF1 in the nucleus in response to FR conditions. PHYA-specific signal transducer in response to continuous FR lights. Contributes to inhibition of hypocotyl elongation in continuous blue light (B). This is Protein FAR-RED ELONGATED HYPOCOTYL 1 from Arabidopsis thaliana (Mouse-ear cress).